Reading from the N-terminus, the 876-residue chain is Serrate RNA effector molecule homolog (876 aa).

The interval 1–90 (MGDSDDEYDR…RRDWDEHSSD (90 aa)) is disordered. The residue at position 2 (Gly2) is an N-acetylglycine. At Ser4 the chain carries Phosphoserine. Tyr8 is modified (phosphotyrosine). The span at 8 to 73 (YDRRRRDKFR…ERFSPPRHEL (66 aa)) shows a compositional bias: basic and acidic residues. 3 positions are modified to phosphoserine: Ser67, Ser74, and Ser136. Residue Lys150 forms a Glycyl lysine isopeptide (Lys-Gly) (interchain with G-Cter in SUMO2) linkage. The tract at residues 272–413 (EEEEQAGKPG…PKDAPGLECK (142 aa)) is disordered. The segment covering 297–347 (DGERKANEKDDKKEDGKQAENESSSDDKIKKSEGDGDKEEKKEDSEKEAKK) has biased composition (basic and acidic residues). The span at 370-387 (SESESESGQAEEEKEEAD) shows a compositional bias: acidic residues. The segment covering 388–413 (ETLKEKEKPKEEEREKPKDAPGLECK) has biased composition (basic and acidic residues). Position 493 is a phosphoserine (Ser493). Thr544 is modified (phosphothreonine). Ser570 is modified (phosphoserine). Positions 575–597 (ELLGSSGGAPPEEPPKEGNPAEI) are disordered. Thr671 carries the post-translational modification Phosphothreonine. A Phosphoserine modification is found at Ser679. 3 positions are modified to omega-N-methylarginine: Arg833, Arg840, and Arg850. Residues 835–854 (NYDAFRGQGGYPGKPRNRMV) are disordered.

Belongs to the ARS2 family. In terms of assembly, interacts with CASP8AP2, ERBB4, NCBP1/CBP80 and DROSHA. Interacts with LUZP4. Interacts with NCBP2/CBP20 and NCBP3. Interacts with MTREX.

It localises to the nucleus. The protein localises to the nucleoplasm. Its subcellular location is the cytoplasm. Functionally, acts as a mediator between the cap-binding complex (CBC) and the primary microRNAs (miRNAs) processing machinery during cell proliferation. Contributes to the stability and delivery of capped primary miRNA transcripts to the primary miRNA processing complex containing DGCR8 and DROSHA, thereby playing a role in RNA-mediated gene silencing (RNAi) by miRNAs. Binds capped RNAs (m7GpppG-capped RNA); however interaction is probably mediated via its interaction with NCBP1/CBP80 component of the CBC complex. Involved in cell cycle progression at S phase. Does not directly confer arsenite resistance but rather modulates arsenic sensitivity. Independently of its activity on miRNAs, necessary and sufficient to promote neural stem cell self-renewal. Does so by directly binding SOX2 promoter and positively regulating its transcription. In Bos taurus (Bovine), this protein is Serrate RNA effector molecule homolog (SRRT).